The following is a 314-amino-acid chain: Methionyl-tRNA formyltransferase (314 aa).

112–115 (SLLP) provides a ligand contact to (6S)-5,6,7,8-tetrahydrofolate.

The protein belongs to the Fmt family.

It carries out the reaction L-methionyl-tRNA(fMet) + (6R)-10-formyltetrahydrofolate = N-formyl-L-methionyl-tRNA(fMet) + (6S)-5,6,7,8-tetrahydrofolate + H(+). Its function is as follows. Attaches a formyl group to the free amino group of methionyl-tRNA(fMet). The formyl group appears to play a dual role in the initiator identity of N-formylmethionyl-tRNA by promoting its recognition by IF2 and preventing the misappropriation of this tRNA by the elongation apparatus. The polypeptide is Methionyl-tRNA formyltransferase (Buchnera aphidicola subsp. Schizaphis graminum (strain Sg)).